Reading from the N-terminus, the 661-residue chain is PAN2-PAN3 deadenylation complex subunit pan3 (661 aa).

Disordered stretches follow at residues 1-29 (MASVGKPSLEDARRGTGSPKMKARENAKD) and 53-131 (DPHK…RQDA). Residues 26 to 55 (NAKDTLCRNVTIYGRCRYEDKGCAFNHDPH) form a C3H1-type zinc finger. A PABPC-interacting motif-2 (PAM-2) motif is present at residues 63–83 (NASKKRFNVDSPSFTPSLLPS). Low complexity predominate over residues 77 to 104 (TPSLLPSNGSSPTSSSSSLKKSSTISPK). A compositionally biased stretch (polar residues) spans 115–126 (TAASRSNTSTPG). The tract at residues 263-524 (QTLPNTQLPA…NIDILINGIS (262 aa)) is pseudokinase domain. Residues R315, 364–371 (DYHPLSKT), and 424–425 (SK) each bind ATP. The stretch at 525–563 (SQLMSTFDSALHLDDQLTSDLGRELENGRLVRLLTKLNF) forms a coiled coil. The knob domain stretch occupies residues 564 to 661 (INERPEHEHD…ALLRPSRRPH (98 aa)).

Belongs to the protein kinase superfamily. PAN3 family. In terms of assembly, homodimer. Forms a heterotrimer with a catalytic subunit pan2 to form the poly(a)-nuclease (PAN) deadenylation complex. Interacts (via PAM-2 motif) with poly(A)-binding protein pab1 (via PABC domain), conferring substrate specificity of the enzyme complex.

It is found in the cytoplasm. Regulatory subunit of the poly(A)-nuclease (PAN) deadenylation complex, one of two cytoplasmic mRNA deadenylases involved in mRNA turnover. PAN specifically shortens poly(A) tails of RNA and the activity is stimulated by poly(A)-binding protein pab1. PAN deadenylation is followed by rapid degradation of the shortened mRNA tails by the CCR4-NOT complex. Deadenylated mRNAs are then degraded by two alternative mechanisms, namely exosome-mediated 3'-5' exonucleolytic degradation, or deadenylation-dependent mRNA decaping and subsequent 5'-3' exonucleolytic degradation by XRN1. May also be involved in post-transcriptional maturation of mRNA poly(A) tails. pan3 acts as a positive regulator for PAN activity, recruiting the catalytic subunit pan2 to mRNA via its interaction with RNA and with pab1. The polypeptide is PAN2-PAN3 deadenylation complex subunit pan3 (Emericella nidulans (strain FGSC A4 / ATCC 38163 / CBS 112.46 / NRRL 194 / M139) (Aspergillus nidulans)).